A 442-amino-acid polypeptide reads, in one-letter code: tRNA-2-methylthio-N(6)-dimethylallyladenosine synthase (442 aa).

Positions 5 to 122 (KRIFIKTFGC…LPDMIESKRR (118 aa)) constitute an MTTase N-terminal domain. 6 residues coordinate [4Fe-4S] cluster: C14, C51, C85, C159, C163, and C166. The region spanning 145 to 377 (RVEGAAAFLS…QALNEAQGKA (233 aa)) is the Radical SAM core domain. One can recognise a TRAM domain in the interval 380-442 (ASMVGSIQRV…LSHTLRGELV (63 aa)).

The protein belongs to the methylthiotransferase family. MiaB subfamily. As to quaternary structure, monomer. It depends on [4Fe-4S] cluster as a cofactor.

Its subcellular location is the cytoplasm. It carries out the reaction N(6)-dimethylallyladenosine(37) in tRNA + (sulfur carrier)-SH + AH2 + 2 S-adenosyl-L-methionine = 2-methylsulfanyl-N(6)-dimethylallyladenosine(37) in tRNA + (sulfur carrier)-H + 5'-deoxyadenosine + L-methionine + A + S-adenosyl-L-homocysteine + 2 H(+). Catalyzes the methylthiolation of N6-(dimethylallyl)adenosine (i(6)A), leading to the formation of 2-methylthio-N6-(dimethylallyl)adenosine (ms(2)i(6)A) at position 37 in tRNAs that read codons beginning with uridine. The chain is tRNA-2-methylthio-N(6)-dimethylallyladenosine synthase from Methylobacillus flagellatus (strain ATCC 51484 / DSM 6875 / VKM B-1610 / KT).